Reading from the N-terminus, the 178-residue chain is UPF0228 protein MA_4223 (178 aa).

It belongs to the UPF0228 family.

In Methanosarcina acetivorans (strain ATCC 35395 / DSM 2834 / JCM 12185 / C2A), this protein is UPF0228 protein MA_4223.